The chain runs to 227 residues: Interleukin-6 (227 aa).

An N-terminal signal peptide occupies residues 1 to 22 (MASISYLLAPLVLAAVLQPTAG). Positions 24–45 (PLDAPTESPAGETSGEEAETGS) are disordered. Residues Cys-93 and Cys-103 are joined by a disulfide bond.

This sequence belongs to the IL-6 superfamily. In terms of assembly, component of a hexamer of two molecules each of IL6, IL6R and IL6ST; first binds to IL6R to associate with the signaling subunit IL6ST. As to expression, after induction, highly expressed in spleen. Can also be expressed in kidney after incubation with PHA.

Its subcellular location is the secreted. Functionally, cytokine with a wide variety of biological functions in immunity, tissue regeneration, and metabolism. Binds to IL6R, then the complex associates to the signaling subunit IL6ST/gp130 to trigger the intracellular IL6-signaling pathway. The interaction with the membrane-bound IL6R and IL6ST stimulates 'classic signaling', whereas the binding of IL6 and soluble IL6R to IL6ST stimulates 'trans-signaling'. Alternatively, 'cluster signaling' occurs when membrane-bound IL6:IL6R complexes on transmitter cells activate IL6ST receptors on neighboring receiver cells. The sequence is that of Interleukin-6 (il6) from Takifugu rubripes (Japanese pufferfish).